The sequence spans 878 residues: Serine/threonine-protein kinase D2 (878 aa).

Residues methionine 1–proline 12 show a composition bias toward low complexity. A disordered region spans residues methionine 1 to leucine 35. Positions serine 14–leucine 35 are enriched in pro residues. A Phosphoserine modification is found at serine 30. Position 87 is a phosphotyrosine (tyrosine 87). The Phorbol-ester/DAG-type 1 zinc finger occupies proline 138 to cysteine 188. Residues serine 197, serine 198, serine 200, serine 203, serine 206, serine 212, and serine 214 each carry the phosphoserine modification. Residues arginine 224–threonine 247 are disordered. Over residues serine 236–serine 245 the composition is skewed to low complexity. Serine 244 carries the post-translational modification Phosphoserine; by CSNK1D and CSNK1E. The Phorbol-ester/DAG-type 2 zinc-finger motif lies at proline 264–cysteine 314. Residues glutamate 343–glutamine 373 form a disordered region. The PH domain occupies threonine 397 to methionine 509. At tyrosine 407 the chain carries Phosphotyrosine. Tyrosine 438 carries the post-translational modification Phosphotyrosine; by ABL1. The residue at position 518 (serine 518) is a Phosphoserine. The region spanning isoleucine 551–leucine 807 is the Protein kinase domain. ATP is bound by residues leucine 557–valine 565 and lysine 580. The active-site Proton acceptor is aspartate 674. The residue at position 706 (serine 706) is a Phosphoserine; by PKC. Position 710 is a phosphoserine (serine 710). Phosphotyrosine; by ABL1 is present on tyrosine 717. The short motif at leucine 724–glutamine 726 is the Important for ABL1-mediated Tyr-717 phosphorylation element. Residues histidine 844–glutamine 869 are disordered. Serine 876 is subject to Phosphoserine; by autocatalysis.

Belongs to the protein kinase superfamily. CAMK Ser/Thr protein kinase family. PKD subfamily. As to quaternary structure, interacts (via C-terminus) with LCK. Interacts (via N-terminal AP-rich region) with CIB1 isoform 2. Interacts (via N-terminus and zing-finger domain 1 and 2) with PRKCD in response to oxidative stress; the interaction is independent of PRKD2 tyrosine phosphorylation. Mg(2+) is required as a cofactor. Phosphorylation of Ser-876 correlates with the activation status of the kinase. Ser-706 or/and Ser-710 are probably phosphorylated by PKC. Phosphorylation at Ser-244 by CSNK1D and CSNK1E promotes nuclear localization and substrate targeting. Phosphorylation at Ser-244, Ser-706 and Ser-710 is required for nuclear localization. Phosphorylated at Tyr-438 by ABL1 in response to oxidative stress. Phosphorylated at Tyr-717 by ABL1 specifically in response to oxidative stress; requires prior phosphorylation at Ser-706 or/and Ser-710. Widely expressed.

It localises to the cytoplasm. The protein localises to the cell membrane. It is found in the nucleus. The protein resides in the golgi apparatus. Its subcellular location is the trans-Golgi network. It catalyses the reaction L-seryl-[protein] + ATP = O-phospho-L-seryl-[protein] + ADP + H(+). The catalysed reaction is L-threonyl-[protein] + ATP = O-phospho-L-threonyl-[protein] + ADP + H(+). Activated by DAG and phorbol esters. Phorbol-ester/DAG-type domains bind DAG, mediating translocation to membranes. Autophosphorylation of Ser-710 and phosphorylation of Ser-706 by PKC relieves auto-inhibition by the PH domain. Catalytic activity is further increased by phosphorylation at Tyr-717 in response to oxidative stress. Its function is as follows. Serine/threonine-protein kinase that converts transient diacylglycerol (DAG) signals into prolonged physiological effects downstream of PKC, and is involved in the regulation of cell proliferation via MAPK1/3 (ERK1/2) signaling, oxidative stress-induced NF-kappa-B activation, inhibition of HDAC7 transcriptional repression, signaling downstream of T-cell antigen receptor (TCR) and cytokine production, and plays a role in Golgi membrane trafficking, angiogenesis, secretory granule release and cell adhesion. May potentiate mitogenesis induced by the neuropeptide bombesin by mediating an increase in the duration of MAPK1/3 (ERK1/2) signaling, which leads to accumulation of immediate-early gene products including FOS that stimulate cell cycle progression. In response to oxidative stress, is phosphorylated at Tyr-438 and Tyr-717 by ABL1, which leads to the activation of PRKD2 without increasing its catalytic activity, and mediates activation of NF-kappa-B. In response to the activation of the gastrin receptor CCKBR, is phosphorylated at Ser-244 by CSNK1D and CSNK1E, translocates to the nucleus, phosphorylates HDAC7, leading to nuclear export of HDAC7 and inhibition of HDAC7 transcriptional repression of NR4A1/NUR77. Upon TCR stimulation, is activated independently of ZAP70, translocates from the cytoplasm to the nucleus and is required for interleukin-2 (IL2) promoter up-regulation. During adaptive immune responses, is required in peripheral T-lymphocytes for the production of the effector cytokines IL2 and IFNG after TCR engagement and for optimal induction of antibody responses to antigens. In epithelial cells stimulated with lysophosphatidic acid (LPA), is activated through a PKC-dependent pathway and mediates LPA-stimulated interleukin-8 (IL8) secretion via a NF-kappa-B-dependent pathway. During TCR-induced T-cell activation, interacts with and is activated by the tyrosine kinase LCK, which results in the activation of the NFAT transcription factors. In the trans-Golgi network (TGN), regulates the fission of transport vesicles that are on their way to the plasma membrane and in polarized cells is involved in the transport of proteins from the TGN to the basolateral membrane. Plays an important role in endothelial cell proliferation and migration prior to angiogenesis, partly through modulation of the expression of KDR/VEGFR2 and FGFR1, two key growth factor receptors involved in angiogenesis. In secretory pathway, is required for the release of chromogranin-A (CHGA)-containing secretory granules from the TGN. Downstream of PRKCA, plays important roles in angiotensin-2-induced monocyte adhesion to endothelial cells. Plays a regulatory role in angiogenesis and tumor growth by phosphorylating a downstream mediator CIB1 isoform 2, resulting in vascular endothelial growth factor A (VEGFA) secretion. The chain is Serine/threonine-protein kinase D2 (PRKD2) from Homo sapiens (Human).